The following is a 24-amino-acid chain: Cytochrome c3-2 (24 aa).

Positions 1-24 (GNAPAADMVLKAPGDAKMTKTAVP) are disordered.

In terms of processing, binds 4 heme groups per subunit.

It is found in the periplasm. Participates in sulfate respiration coupled with phosphorylation by transferring electrons from the enzyme dehydrogenase to ferredoxin. This Nitratidesulfovibrio vulgaris (Desulfovibrio vulgaris) protein is Cytochrome c3-2.